Consider the following 521-residue polypeptide: Protein NRT1/ PTR FAMILY 5.5 (521 aa).

12 consecutive transmembrane segments (helical) span residues 3-23 (VLSWAFTVAWFTLWMLMLYLT), 35-55 (AIVNVFAGVSAIGHLGMQFLV), 62-82 (FWMLCLSTLAFSFGFGFLAIS), 96-116 (FYVALTVISVGIFGRSISLGV), 134-154 (LVSFVIGNVGNFVFLLLAAIA), 165-185 (FTIPSGCEVLAMLIFISGACS), 279-299 (VPLFATSLISGIVFSLGNTFF), 310-327 (FGSWNLPLPLLLLFSEAA), 356-376 (PYGIPVSIILSIFCCSIAAHV), 394-414 (VPMSVFWLLPQYILLGSITGI), 440-460 (VGVCGVGIMSNIALVSLVGSV), and 478-498 (YYWVITVFCMFNLLLYFIVTY).

It belongs to the major facilitator superfamily. Proton-dependent oligopeptide transporter (POT/PTR) (TC 2.A.17) family. In terms of tissue distribution, expressed in roots.

Its subcellular location is the membrane. This chain is Protein NRT1/ PTR FAMILY 5.5 (NPF5.5), found in Arabidopsis thaliana (Mouse-ear cress).